The following is a 496-amino-acid chain: Sporulation-killing factor biosynthesis protein SkfC (496 aa).

7 helical membrane passes run 1–21, 224–244, 248–268, 291–311, 331–351, 399–419, and 443–463; these read MNSLSLVFWSILAVVGLLLFI, VSGMLGSALAMILAILILVFM, TSIIFSLVLGLLIIICQSLTL, LLGILSTLLTGLLTGFVVFIC, IVQIFYGIGAGLISLGVTSLL, LLMIPVIWWMSGNILISIIVS, and FIFGCFLGVLFIKFGFICVLV.

The protein localises to the membrane. In terms of biological role, required for production of the bacteriocin SkfA. This is Sporulation-killing factor biosynthesis protein SkfC from Bacillus subtilis (strain 168).